We begin with the raw amino-acid sequence, 427 residues long: Glutamate-1-semialdehyde 2,1-aminomutase (427 aa).

Residue lysine 263 is modified to N6-(pyridoxal phosphate)lysine.

Belongs to the class-III pyridoxal-phosphate-dependent aminotransferase family. HemL subfamily. In terms of assembly, homodimer. The cofactor is pyridoxal 5'-phosphate.

It is found in the cytoplasm. It carries out the reaction (S)-4-amino-5-oxopentanoate = 5-aminolevulinate. The protein operates within porphyrin-containing compound metabolism; protoporphyrin-IX biosynthesis; 5-aminolevulinate from L-glutamyl-tRNA(Glu): step 2/2. This is Glutamate-1-semialdehyde 2,1-aminomutase from Caldicellulosiruptor saccharolyticus (strain ATCC 43494 / DSM 8903 / Tp8T 6331).